Reading from the N-terminus, the 289-residue chain is Serine/threonine-protein phosphatase Pgam5, mitochondrial (289 aa).

Residues 7–23 (FACGTGAGLLTFYLTKL) form a helical membrane-spanning segment.

This sequence belongs to the phosphoglycerate mutase family. BPG-dependent PGAM subfamily. As to quaternary structure, interacts with Pk92B/ASK1.

It localises to the mitochondrion outer membrane. The enzyme catalyses O-phospho-L-seryl-[protein] + H2O = L-seryl-[protein] + phosphate. The catalysed reaction is O-phospho-L-threonyl-[protein] + H2O = L-threonyl-[protein] + phosphate. Functionally, displays phosphatase activity for serine/threonine residues, and dephosphorylates and activates Pk92B kinase. Has apparently no phosphoglycerate mutase activity. The sequence is that of Serine/threonine-protein phosphatase Pgam5, mitochondrial (Pgam5) from Drosophila pseudoobscura pseudoobscura (Fruit fly).